A 679-amino-acid chain; its full sequence is Enzymatic polyprotein (679 aa).

The tract at residues 40–130 is protease; that stretch reads LHCFVDTGAS…LYEPFIQFTD (91 aa). The active site involves Asp45. The Reverse transcriptase domain occupies 272–452; that stretch reads LKVIKPSKSP…KKINFLGLEI (181 aa).

It belongs to the caulimoviridae enzymatic polyprotein family.

It carries out the reaction DNA(n) + a 2'-deoxyribonucleoside 5'-triphosphate = DNA(n+1) + diphosphate. Encodes for at least two polypeptides: protease (PR) and reverse transcriptase (RT). The protease processes the polyprotein in cis. Reverse transcriptase is multifunctional enzyme that converts the viral RNA genome into dsDNA in viral cytoplasmic capsids. This enzyme displays a DNA polymerase activity that can copy either DNA or RNA templates, and a ribonuclease H (RNase H) activity that cleaves the RNA strand of RNA-DNA heteroduplexes in a partially processive 3'- to 5'-endonucleasic mode. Neo-synthesized pregenomic RNA (pgRNA) are encapsidated, and reverse-transcribed inside the nucleocapsid. Partial (+)DNA is synthesized from the (-)DNA template and generates the relaxed circular DNA (RC-DNA) genome. After budding and infection, the RC-DNA migrates in the nucleus, and is converted into a plasmid-like covalently closed circular DNA (cccDNA). The sequence is that of Enzymatic polyprotein from Cauliflower mosaic virus (strain BBC) (CaMV).